The following is a 457-amino-acid chain: Argininosuccinate lyase (457 aa).

The protein belongs to the lyase 1 family. Argininosuccinate lyase subfamily.

It is found in the cytoplasm. The catalysed reaction is 2-(N(omega)-L-arginino)succinate = fumarate + L-arginine. It participates in amino-acid biosynthesis; L-arginine biosynthesis; L-arginine from L-ornithine and carbamoyl phosphate: step 3/3. This chain is Argininosuccinate lyase, found in Pasteurella multocida (strain Pm70).